A 415-amino-acid chain; its full sequence is Serine hydroxymethyltransferase (415 aa).

Residues leucine 117 and 121–123 (GHL) contribute to the (6S)-5,6,7,8-tetrahydrofolate site. The residue at position 226 (lysine 226) is an N6-(pyridoxal phosphate)lysine. (6S)-5,6,7,8-tetrahydrofolate-binding positions include glutamate 241 and 349-351 (SPF).

Belongs to the SHMT family. As to quaternary structure, homodimer. It depends on pyridoxal 5'-phosphate as a cofactor.

The protein localises to the cytoplasm. The enzyme catalyses (6R)-5,10-methylene-5,6,7,8-tetrahydrofolate + glycine + H2O = (6S)-5,6,7,8-tetrahydrofolate + L-serine. Its pathway is one-carbon metabolism; tetrahydrofolate interconversion. It participates in amino-acid biosynthesis; glycine biosynthesis; glycine from L-serine: step 1/1. Functionally, catalyzes the reversible interconversion of serine and glycine with tetrahydrofolate (THF) serving as the one-carbon carrier. This reaction serves as the major source of one-carbon groups required for the biosynthesis of purines, thymidylate, methionine, and other important biomolecules. Also exhibits THF-independent aldolase activity toward beta-hydroxyamino acids, producing glycine and aldehydes, via a retro-aldol mechanism. This is Serine hydroxymethyltransferase from Trichlorobacter lovleyi (strain ATCC BAA-1151 / DSM 17278 / SZ) (Geobacter lovleyi).